A 753-amino-acid chain; its full sequence is MTILNHTLGFPRVGLRRELKKAQESYWAGNSTREELLAVGRELRARHWDQQKQAGIDLLPVGDFAWYDHVLTTSLLLGNVPARHQNKDGSVDIDTLFRIGRGRAPTGEPAAAAEMTKWFNTNYHYMVPEFVKGQQFKLTWTQLLDEVDEALALGHKVKPVLLGPITWLWLGKVKGEQFDRLSLLNDILPVYQQVLAELAKRGIEWVQIDEPALVLELPQAWLDAYKPAYDALQGQVKLLLTTYFEGVTPNLDTITALPVQGLHVDLVHGKDDVVELHKRLPSDWLLSAGLINGRNVWRADLTEKYVQIKDIVGKRDLWVASSCSLLHSPIDLSVETRLDAEVKSWFAFALQKCHELALLRDALNSGDTAALAEWSAPIQARRHSTRVHNPAVEKRLAAITAQDSQRANVYEVRAEAQRARFKLPAWPTTTIGSFPQTTEIRTLRLDFKKGNLDANNYRTGIAEHIRQAIVEQERLGLDVLVHGEAERNDMVEYFGEHLDGFVFTQNGWVQSYGSRCVKPPIVIGDVSRPAPITVEWAKYAQSMTDKPVKGMLTGPVTILCWSFPREDVSRETIAKQIALALRDEVADLEAAGIGIIQIDEPALREGLPLRRSDWDAYLQWGVEAFRINAAVAKDDTQIHTHMCYCEFNDIMDSIAALDADVITIETSRSDMELLESFEEFDYPNEIGPGVYDIHSPNVPSVEWIEALLKKAAKRIPAERLWVNPDCGLKTRGWPETRAALANMVQAAQNLRRG.

5-methyltetrahydropteroyltri-L-glutamate is bound by residues 17–20 (RELK) and lysine 117. L-homocysteine-binding positions include 431 to 433 (IGS) and glutamate 484. L-methionine-binding positions include 431 to 433 (IGS) and glutamate 484. 5-methyltetrahydropteroyltri-L-glutamate is bound by residues 515 to 516 (RC) and tryptophan 561. L-homocysteine is bound at residue aspartate 599. L-methionine is bound at residue aspartate 599. Glutamate 605 provides a ligand contact to 5-methyltetrahydropteroyltri-L-glutamate. The Zn(2+) site is built by histidine 641, cysteine 643, and glutamate 665. Catalysis depends on histidine 694, which acts as the Proton donor. Cysteine 726 provides a ligand contact to Zn(2+).

The protein belongs to the vitamin-B12 independent methionine synthase family. Zn(2+) is required as a cofactor.

It carries out the reaction 5-methyltetrahydropteroyltri-L-glutamate + L-homocysteine = tetrahydropteroyltri-L-glutamate + L-methionine. It functions in the pathway amino-acid biosynthesis; L-methionine biosynthesis via de novo pathway; L-methionine from L-homocysteine (MetE route): step 1/1. Catalyzes the transfer of a methyl group from 5-methyltetrahydrofolate to homocysteine resulting in methionine formation. The polypeptide is 5-methyltetrahydropteroyltriglutamate--homocysteine methyltransferase (Escherichia coli O157:H7 (strain EC4115 / EHEC)).